A 194-amino-acid polypeptide reads, in one-letter code: UPF0301 protein BPEN_258 (194 aa).

This sequence belongs to the UPF0301 (AlgH) family.

The polypeptide is UPF0301 protein BPEN_258 (Blochmanniella pennsylvanica (strain BPEN)).